A 447-amino-acid polypeptide reads, in one-letter code: MLKFIFMIMFIFFLFFKKNIYWMVQNLIFLATCLFMIKISSNYYFCDISYYFGMDMISYGLILLSFWICGLMLMASEGVVRYNNYVNLFLFMIVFLLLMLIFTFSSMSMFMFYLFFESSLIPTLFLILGWGYQPERLQAGIYLLFYTLLASLPLLIGIFYIKNDNYTMNFIMLSYKNLYNLDFLYLCMIFAFLVKMPMFLVHLWLPKAHVEAPVSGSMILAGVLLKLGGYGLLRVFSLMQVLGMKFNYIWISISLIGGVLVSLICLWQMDLKALIAYSSVAHMGIVLSGLMTMTYWGLNGSYTLMIAHGLCSSGLFCLANISYERMGSRSLLINKGMLNFMPSLSLWWFLLCSGNMAAPPTLNLLGEISLLNSIVSWSWLTMISLAFLSFFSAAYTLYLFAYSQHGKIYSGVYFFSSGTTREFLVLMLHWLPLNLLIMKSNFCMLWI.

Transmembrane regions (helical) follow at residues 28-48, 56-76, 85-105, 110-130, 141-161, 183-203, 213-233, 246-266, 273-293, 301-321, 343-365, 380-400, and 409-431; these read IFLATCLFMIKISSNYYFCDI, MISYGLILLSFWICGLMLMAS, YVNLFLFMIVFLLLMLIFTFS, FMFYLFFESSLIPTLFLILGW, IYLLFYTLLASLPLLIGIFYI, FLYLCMIFAFLVKMPMFLVHL, PVSGSMILAGVLLKLGGYGLL, FNYIWISISLIGGVLVSLICL, ALIAYSSVAHMGIVLSGLMTM, SYTLMIAHGLCSSGLFCLANI, SLSLWWFLLCSGNMAAPPTLNLL, LTMISLAFLSFFSAAYTLYLF, and YSGVYFFSSGTTREFLVLMLHWL.

Belongs to the complex I subunit 4 family.

The protein localises to the mitochondrion membrane. The catalysed reaction is a ubiquinone + NADH + 5 H(+)(in) = a ubiquinol + NAD(+) + 4 H(+)(out). Functionally, core subunit of the mitochondrial membrane respiratory chain NADH dehydrogenase (Complex I) that is believed to belong to the minimal assembly required for catalysis. Complex I functions in the transfer of electrons from NADH to the respiratory chain. The immediate electron acceptor for the enzyme is believed to be ubiquinone. The chain is NADH-ubiquinone oxidoreductase chain 4 from Aedes aegypti (Yellowfever mosquito).